A 167-amino-acid polypeptide reads, in one-letter code: Ribosome maturation factor RimP (167 aa).

The protein belongs to the RimP family.

The protein localises to the cytoplasm. In terms of biological role, required for maturation of 30S ribosomal subunits. This is Ribosome maturation factor RimP from Cytophaga hutchinsonii (strain ATCC 33406 / DSM 1761 / CIP 103989 / NBRC 15051 / NCIMB 9469 / D465).